The sequence spans 211 residues: Uracil phosphoribosyltransferase (211 aa).

5-phospho-alpha-D-ribose 1-diphosphate-binding positions include arginine 81, arginine 106, and 133–141; that span reads DPMLATGNS. Residues isoleucine 196 and 201-203 contribute to the uracil site; that span reads GDA. A 5-phospho-alpha-D-ribose 1-diphosphate-binding site is contributed by aspartate 202.

This sequence belongs to the UPRTase family. Requires Mg(2+) as cofactor.

The catalysed reaction is UMP + diphosphate = 5-phospho-alpha-D-ribose 1-diphosphate + uracil. It functions in the pathway pyrimidine metabolism; UMP biosynthesis via salvage pathway; UMP from uracil: step 1/1. Allosterically activated by GTP. In terms of biological role, catalyzes the conversion of uracil and 5-phospho-alpha-D-ribose 1-diphosphate (PRPP) to UMP and diphosphate. This Paracoccus denitrificans (strain Pd 1222) protein is Uracil phosphoribosyltransferase.